Consider the following 560-residue polypeptide: Diphtheria toxin homolog CRM228 (560 aa).

The first 25 residues, Met1–Ala25, serve as a signal peptide directing secretion. The NAD(+) site is built by His46 and Tyr90. Glu173 is a catalytic residue. 2 cysteine pairs are disulfide-bonded: Cys211–Cys226 and Cys486–Cys496.

The protein is Diphtheria toxin homolog CRM228 of Corynebacterium diphtheriae.